We begin with the raw amino-acid sequence, 205 residues long: Snake venom metalloproteinase BmooMPalpha-I (205 aa).

The Peptidase M12B domain maps to 8 to 204 (RYIELVVVAD…HNPQCILNEP (197 aa)). 2 residues coordinate Ca(2+): Glu11 and Asp95. 3 disulfide bridges follow: Cys119–Cys199, Cys159–Cys183, and Cys161–Cys166. His144 contributes to the Zn(2+) binding site. Glu145 is an active-site residue. Residues His148 and His154 each contribute to the Zn(2+) site. Positions 199 and 202 each coordinate Ca(2+).

The protein belongs to the venom metalloproteinase (M12B) family. P-I subfamily. In terms of assembly, monomer. Zn(2+) is required as a cofactor. As to expression, expressed by the venom gland.

It localises to the secreted. Inhibited by EDTA. Not inhibited by the serine proteinase inhibitors aprotinin and benzamidine. Its function is as follows. Snake venom zinc metalloproteinase that cleaves the alpha chain of fibrinogen (FGA) first followed by the beta chain (FGB) and shows no effect on the gamma chain. Cleaves only the beta chain of fibrin, leaving the gamma-dimer untouched. Shows proteolytic activity towards azocasein. Causes defibrinogenation when intraperitoneally administered on mice. This is Snake venom metalloproteinase BmooMPalpha-I from Bothrops moojeni (Lance-headed viper).